The sequence spans 261 residues: Cytosolic Fe-S cluster assembly factor Nubp2 homolog (261 aa).

An ATP-binding site is contributed by G14 to S21. [4Fe-4S] cluster contacts are provided by C188 and C191.

Belongs to the Mrp/NBP35 ATP-binding proteins family. NUBP2/CFD1 subfamily. In terms of assembly, heterotetramer of 2 Nubp1 and 2 Nubp2 chains. The cofactor is [4Fe-4S] cluster.

Its subcellular location is the cytoplasm. In terms of biological role, component of the cytosolic iron-sulfur (Fe/S) protein assembly (CIA) machinery. Required for maturation of extramitochondrial Fe-S proteins. The Nubp1-Nubp2 heterotetramer forms a Fe-S scaffold complex, mediating the de novo assembly of an Fe-S cluster and its transfer to target apoproteins. This chain is Cytosolic Fe-S cluster assembly factor Nubp2 homolog, found in Drosophila willistoni (Fruit fly).